The primary structure comprises 681 residues: UvrABC system protein C (681 aa).

In terms of domain architecture, GIY-YIG spans 16 to 95 (DSPGVYKFRD…IKEYDPRFNV (80 aa)). The UVR domain occupies 208 to 243 (GTYIRRLERQMTDAAEEMEYEKAARLRDDIGALKKA). The tract at residues 650 to 681 (EIMEDEEPGTTAGSSQEPVSAGTSDERRGQET) is disordered. A compositionally biased stretch (polar residues) spans 660-672 (TAGSSQEPVSAGT).

It belongs to the UvrC family. Interacts with UvrB in an incision complex.

The protein localises to the cytoplasm. Its function is as follows. The UvrABC repair system catalyzes the recognition and processing of DNA lesions. UvrC both incises the 5' and 3' sides of the lesion. The N-terminal half is responsible for the 3' incision and the C-terminal half is responsible for the 5' incision. This Streptomyces avermitilis (strain ATCC 31267 / DSM 46492 / JCM 5070 / NBRC 14893 / NCIMB 12804 / NRRL 8165 / MA-4680) protein is UvrABC system protein C.